The sequence spans 173 residues: Lens fiber membrane intrinsic protein (173 aa).

The Cytoplasmic portion of the chain corresponds to 1-3 (MYS). A helical membrane pass occupies residues 4 to 24 (FMGGGLFCAWVGTILLVVATA). The Extracellular portion of the chain corresponds to 25–66 (TDHWMQYRLSGAFAHQGLWRYCLGTKCYLQTESIAYWNATRA). C-linked (Man) tryptophan; partial glycosylation is found at Trp43 and Trp61. Residues 67 to 87 (FMILSSLCATSGIIMGIVAFA) traverse the membrane as a helical segment. Over 88-98 (QQPTFTRLSRP) the chain is Cytoplasmic. The chain crosses the membrane as a helical span at residues 99–119 (FSAGIMFFASTFFVLLALAIY). Residues 120-140 (TGVTVSFLGRRFGDWRFSWSY) lie on the Extracellular side of the membrane. A helical transmembrane segment spans residues 141–161 (ILGWVALLMTFFAGIFYMCAY). At 162 to 173 (RMHECRRLSTPR) the chain is on the cytoplasmic side. A Phosphoserine modification is found at Ser170. The residue at position 171 (Thr171) is a Phosphothreonine.

The protein belongs to the PMP-22/EMP/MP20 family. Seems to be associated with itself or another lens membrane component via disulfide bonds. Predominantly monophosphorylated on Ser-170. Only about 15% diphosphorylated on both Ser-170 and Thr-171. In terms of processing, C-glycosylated. Trp-43 is more extensively C-glycosylated than Trp-61. C-glycosylation may be involved in membrane trafficking. In terms of tissue distribution, eye lens specific.

Its subcellular location is the membrane. Functionally, present in the thicker 16-17 nm junctions of mammalian lens fiber cells, where it may contribute to cell junctional organization. Acts as a receptor for calmodulin. May play an important role in both lens development and cataractogenesis. The chain is Lens fiber membrane intrinsic protein (LIM2) from Bos taurus (Bovine).